Reading from the N-terminus, the 256-residue chain is MAVGKNKRLSKGKKGIKKRTVDPFSRKDEYSVKAPSTFQIRDVGKTLVNRTSGLKNANDSLKGRIFEVSLADLQNDEDHAFRKVKLRVDEIQGKNCLTNFHGLDFTTDKLRSLVRKWQSLIEANVTVKTTDDYLLRLFAIAFTKRRPNQIKKTTYARSSQIRAIRKKMTEIMQREAASCTLSQLTTKLIPEVIGREIEKATQGIYPLQNVHIRKVKLLKAPKFDLGALLNLHGESTTDDKGHKVEREFKEQVLESV.

Basic residues predominate over residues 1–18; sequence MAVGKNKRLSKGKKGIKK. Residues 1–20 form a disordered region; that stretch reads MAVGKNKRLSKGKKGIKKRT. Ala2 is modified (N-acetylalanine; partial).

It belongs to the eukaryotic ribosomal protein eS1 family. In terms of assembly, component of the small ribosomal subunit. Mature ribosomes consist of a small (40S) and a large (60S) subunit. The 40S subunit contains about 33 different proteins and 1 molecule of RNA (18S). The 60S subunit contains about 49 different proteins and 3 molecules of RNA (25S, 5.8S and 5S).

It localises to the cytoplasm. In Aspergillus flavus (strain ATCC 200026 / FGSC A1120 / IAM 13836 / NRRL 3357 / JCM 12722 / SRRC 167), this protein is Small ribosomal subunit protein eS1 (rps1).